Consider the following 278-residue polypeptide: NH(3)-dependent NAD(+) synthetase (278 aa).

43–50 (GISGGVDS) serves as a coordination point for ATP. Asp-49 provides a ligand contact to Mg(2+). Position 146 (Arg-146) interacts with deamido-NAD(+). Residue Thr-166 participates in ATP binding. Residue Glu-171 coordinates Mg(2+). The deamido-NAD(+) site is built by Lys-179 and Asp-186. ATP-binding residues include Lys-195 and Thr-217. Residue 266-267 (HK) coordinates deamido-NAD(+).

This sequence belongs to the NAD synthetase family. In terms of assembly, homodimer.

It catalyses the reaction deamido-NAD(+) + NH4(+) + ATP = AMP + diphosphate + NAD(+) + H(+). It functions in the pathway cofactor biosynthesis; NAD(+) biosynthesis; NAD(+) from deamido-NAD(+) (ammonia route): step 1/1. In terms of biological role, catalyzes the ATP-dependent amidation of deamido-NAD to form NAD. Uses ammonia as a nitrogen source. The chain is NH(3)-dependent NAD(+) synthetase from Pseudoalteromonas translucida (strain TAC 125).